The primary structure comprises 260 residues: DNA-directed RNA polymerase subunit Rpo3 (260 aa).

The protein belongs to the archaeal Rpo3/eukaryotic RPB3 RNA polymerase subunit family. Part of the RNA polymerase complex.

The protein resides in the cytoplasm. The catalysed reaction is RNA(n) + a ribonucleoside 5'-triphosphate = RNA(n+1) + diphosphate. In terms of biological role, DNA-dependent RNA polymerase (RNAP) catalyzes the transcription of DNA into RNA using the four ribonucleoside triphosphates as substrates. This Pyrobaculum aerophilum (strain ATCC 51768 / DSM 7523 / JCM 9630 / CIP 104966 / NBRC 100827 / IM2) protein is DNA-directed RNA polymerase subunit Rpo3.